A 587-amino-acid polypeptide reads, in one-letter code: Glutaconyl-CoA decarboxylase subunit alpha (587 aa).

A CoA carboxyltransferase N-terminal domain is found at 31–298 (LKKIEEEIHQ…YDPEFFRVDD (268 aa)). The interval 31-558 (LKKIEEEIHQ…RGYVEAFTEA (528 aa)) is carboxyltransferase. The CoA carboxyltransferase C-terminal domain occupies 295 to 558 (RVDDPKAPAF…RGYVEAFTEA (264 aa)).

As to quaternary structure, heterooctamer consisting of two alpha, two beta, two gamma and two delta subunits.

It catalyses the reaction (2E)-glutaconyl-CoA + Na(+)(in) + H(+) = (2E)-butenoyl-CoA + Na(+)(out) + CO2. Its pathway is amino-acid degradation; L-glutamate degradation via hydroxyglutarate pathway; crotonoyl-CoA from L-glutamate: step 5/5. Its function is as follows. Decarboxylase subunit of the primary sodium pump glutaconyl-CoA decarboxylase (GCD). This is Glutaconyl-CoA decarboxylase subunit alpha (gcdA) from Acidaminococcus fermentans (strain ATCC 25085 / DSM 20731 / CCUG 9996 / CIP 106432 / VR4).